Reading from the N-terminus, the 184-residue chain is MMAMNTETLSLIKQSIKTIPNYPKEGILFRDVTSLLENAAAYKATIDLLVEHYRGQGFTKIVGTEARGFLFGAPLALELGVGFVPVRKPGKLPRATISQSYELEYGHDSLEIHTDAINPNDKVLVVDDLLATGGTIEATVKLIRQLGGEVKHAAFVISLPDLGGEARLTALGLELVKLCEFEGE.

Belongs to the purine/pyrimidine phosphoribosyltransferase family. In terms of assembly, homodimer.

The protein localises to the cytoplasm. The enzyme catalyses AMP + diphosphate = 5-phospho-alpha-D-ribose 1-diphosphate + adenine. It participates in purine metabolism; AMP biosynthesis via salvage pathway; AMP from adenine: step 1/1. In terms of biological role, catalyzes a salvage reaction resulting in the formation of AMP, that is energically less costly than de novo synthesis. This chain is Adenine phosphoribosyltransferase, found in Shewanella baltica (strain OS223).